Consider the following 569-residue polypeptide: Proline--tRNA ligase (569 aa).

This sequence belongs to the class-II aminoacyl-tRNA synthetase family. ProS type 1 subfamily. As to quaternary structure, homodimer.

It localises to the cytoplasm. It catalyses the reaction tRNA(Pro) + L-proline + ATP = L-prolyl-tRNA(Pro) + AMP + diphosphate. In terms of biological role, catalyzes the attachment of proline to tRNA(Pro) in a two-step reaction: proline is first activated by ATP to form Pro-AMP and then transferred to the acceptor end of tRNA(Pro). As ProRS can inadvertently accommodate and process non-cognate amino acids such as alanine and cysteine, to avoid such errors it has two additional distinct editing activities against alanine. One activity is designated as 'pretransfer' editing and involves the tRNA(Pro)-independent hydrolysis of activated Ala-AMP. The other activity is designated 'posttransfer' editing and involves deacylation of mischarged Ala-tRNA(Pro). The misacylated Cys-tRNA(Pro) is not edited by ProRS. The chain is Proline--tRNA ligase from Legionella pneumophila (strain Paris).